Consider the following 548-residue polypeptide: Glycosyl hydrolase family 109 protein 3 (548 aa).

Positions 1 to 21 (MKLKKLLLSVLMLLSISGLQA) are cleaved as a signal peptide. NAD(+) is bound by residues 71-72 (MR), Asp93, 141-144 (WNHH), 161-162 (EV), and Asn190. Residue Tyr219 coordinates substrate. Residue 240–244 (DNLHW) coordinates NAD(+). Residues Arg245, 257–260 (YATH), and Tyr335 each bind substrate. Residue Tyr257 coordinates NAD(+).

This sequence belongs to the Gfo/Idh/MocA family. Glycosyl hydrolase 109 subfamily. The cofactor is NAD(+).

In terms of biological role, glycosidase. The chain is Glycosyl hydrolase family 109 protein 3 from Phocaeicola vulgatus (strain ATCC 8482 / DSM 1447 / JCM 5826 / CCUG 4940 / NBRC 14291 / NCTC 11154) (Bacteroides vulgatus).